We begin with the raw amino-acid sequence, 148 residues long: Putative pre-16S rRNA nuclease (148 aa).

This sequence belongs to the YqgF nuclease family.

It is found in the cytoplasm. In terms of biological role, could be a nuclease involved in processing of the 5'-end of pre-16S rRNA. The protein is Putative pre-16S rRNA nuclease of Chlamydia muridarum (strain MoPn / Nigg).